A 307-amino-acid chain; its full sequence is Putative F-box protein PP2-B6 (307 aa).

The F-box domain maps to 42–88 (HSPFDDLPEDCISNIISFTSPRDVCVSASVSKSFAHAVQCDSIWEKF).

This is Putative F-box protein PP2-B6 (PP2B6) from Arabidopsis thaliana (Mouse-ear cress).